The chain runs to 349 residues: Protein Wnt-7b (349 aa).

The first 24 residues, 1–24 (MHRNFRKWIFYVFLCFGVLYVKLG), serve as a signal peptide directing secretion. 5 cysteine pairs are disulfide-bonded: Cys73-Cys84, Cys123-Cys131, Cys133-Cys152, Cys200-Cys214, and Cys202-Cys209. 2 N-linked (GlcNAc...) asparagine glycosylation sites follow: Asn83 and Asn127. Ser206 carries the O-palmitoleoyl serine; by PORCN lipid modification. Residues 238–266 (VEVVRASRLRQPTFLRIKQLRSYQKPMET) are disordered linker. Intrachain disulfides connect Cys278/Cys309, Cys294/Cys304, Cys308/Cys348, Cys324/Cys339, Cys326/Cys336, and Cys331/Cys332. Residue Asn295 is glycosylated (N-linked (GlcNAc...) asparagine).

This sequence belongs to the Wnt family. In terms of assembly, forms a soluble 1:1 complex with AFM; this prevents oligomerization and is required for prolonged biological activity. The complex with AFM may represent the physiological form in body fluids. Interacts with FZD1 and FZD10. Interacts with FZD4 (in vitro). Interacts with PORCN. Interacts with glypican GPC3. Interacts (via intrinsically disordered linker region) with RECK; interaction with RECK confers ligand selectivity for Wnt7 in brain endothelial cells and allows these cells to selectively respond to Wnt7. Palmitoleoylation is required for efficient binding to frizzled receptors. Depalmitoleoylation leads to Wnt signaling pathway inhibition.

The protein resides in the secreted. It localises to the extracellular space. Its subcellular location is the extracellular matrix. Ligand for members of the frizzled family of seven transmembrane receptors that functions in the canonical Wnt/beta-catenin signaling pathway. Required for normal fusion of the chorion and the allantois during placenta development. Required for central nervous system (CNS) angiogenesis and blood-brain barrier regulation. This chain is Protein Wnt-7b (Wnt7b), found in Mus musculus (Mouse).